The sequence spans 169 residues: Succinate dehydrogenase cytochrome b560 subunit, mitochondrial (169 aa).

Residues 1-29 (MAALLLRHVGRHCLRAHLSPQLCIRNAVP) constitute a mitochondrion transit peptide. At 30-62 (LGTTAKEEMERFWNKNLGSNRPLSPHITIYRWS) the chain is on the mitochondrial matrix side. Residues 63–92 (LPMAMSICHRGTGIALSAGVSLFGLSALLL) traverse the membrane as a helical segment. Residues 93–112 (PGNFESHLELVKSLCLGPTL) lie on the Mitochondrial intermembrane side of the membrane. A helical membrane pass occupies residues 113-137 (IYTAKFGIVFPLMYHTWNGIRHLIW). H127 lines the heme b pocket. Topologically, residues 138-144 (DLGKGLT) are mitochondrial matrix. Residues 145–166 (IPQLTQSGVVVLILTVLSSVGL) form a helical membrane-spanning segment. At 167-169 (AAM) the chain is on the mitochondrial intermembrane side.

This sequence belongs to the cytochrome b560 family. Component of complex II composed of four subunits: the flavoprotein (FP) SDHA, iron-sulfur protein (IP) SDHB, and a cytochrome b560 composed of SDHC and SDHD. Heme b serves as cofactor. In terms of tissue distribution, detected in heart muscle (at protein level).

It is found in the mitochondrion inner membrane. The protein operates within carbohydrate metabolism; tricarboxylic acid cycle. In terms of biological role, membrane-anchoring subunit of succinate dehydrogenase (SDH) that is involved in complex II of the mitochondrial electron transport chain and is responsible for transferring electrons from succinate to ubiquinone (coenzyme Q). SDH also oxidizes malate to the non-canonical enol form of oxaloacetate, enol-oxaloacetate. Enol-oxaloacetate, which is a potent inhibitor of the succinate dehydrogenase activity, is further isomerized into keto-oxaloacetate. This Sus scrofa (Pig) protein is Succinate dehydrogenase cytochrome b560 subunit, mitochondrial (SDHC).